The primary structure comprises 260 residues: Hemin import ATP-binding protein HmuV (260 aa).

The ABC transporter domain maps to 7–243 (IQASNISVTF…ERIEQVYGYS (237 aa)). 39–46 (GPNGAGKS) serves as a coordination point for ATP.

This sequence belongs to the ABC transporter superfamily. Heme (hemin) importer (TC 3.A.1.14.5) family. The complex is composed of two ATP-binding proteins (HmuV), two transmembrane proteins (HmuU) and a solute-binding protein (HmuT).

The protein localises to the cell inner membrane. In terms of biological role, part of the ABC transporter complex HmuTUV involved in hemin import. Responsible for energy coupling to the transport system. This is Hemin import ATP-binding protein HmuV from Vibrio anguillarum (strain ATCC 68554 / 775) (Listonella anguillarum).